Consider the following 164-residue polypeptide: Thiol peroxidase (164 aa).

Positions 18–163 (INEGDFAPDF…FDAALAAYKN (146 aa)) constitute a Thioredoxin domain. The Cysteine sulfenic acid (-SOH) intermediate role is filled by Cys60. Residues Cys60 and Cys93 are joined by a disulfide bond.

The protein belongs to the peroxiredoxin family. Tpx subfamily. In terms of assembly, homodimer.

It catalyses the reaction a hydroperoxide + [thioredoxin]-dithiol = an alcohol + [thioredoxin]-disulfide + H2O. Its function is as follows. Thiol-specific peroxidase that catalyzes the reduction of hydrogen peroxide and organic hydroperoxides to water and alcohols, respectively. Plays a role in cell protection against oxidative stress by detoxifying peroxides. The protein is Thiol peroxidase of Staphylococcus aureus (strain COL).